We begin with the raw amino-acid sequence, 264 residues long: ATP synthase subunit a (264 aa).

A run of 6 helical transmembrane segments spans residues 29 to 49, 90 to 110, 134 to 154, 177 to 197, 208 to 228, and 235 to 255; these read TWHI…LWLF, IAPL…MDMI, DLNI…YYSI, IPVN…SLAL, LIFI…ALGV, and LIFH…LTIV.

The protein belongs to the ATPase A chain family. As to quaternary structure, F-type ATPases have 2 components, CF(1) - the catalytic core - and CF(0) - the membrane proton channel. CF(1) has five subunits: alpha(3), beta(3), gamma(1), delta(1), epsilon(1). CF(0) has three main subunits: a(1), b(2) and c(9-12). The alpha and beta chains form an alternating ring which encloses part of the gamma chain. CF(1) is attached to CF(0) by a central stalk formed by the gamma and epsilon chains, while a peripheral stalk is formed by the delta and b chains.

Its subcellular location is the cell inner membrane. Key component of the proton channel; it plays a direct role in the translocation of protons across the membrane. The protein is ATP synthase subunit a of Shewanella loihica (strain ATCC BAA-1088 / PV-4).